A 240-amino-acid polypeptide reads, in one-letter code: Manganese transport system ATP-binding protein MntB (240 aa).

In terms of domain architecture, ABC transporter spans 1-233 (MEIQGLTIAY…KIQFAYGDAP (233 aa)). 33–40 (GPNGAGKS) is an ATP binding site.

Belongs to the ABC transporter superfamily.

It is found in the cell membrane. Its function is as follows. This protein is probably a component of a manganese permease, a binding protein-dependent, ATP-driven transport system. Probably responsible for energy coupling to the transport system. The protein is Manganese transport system ATP-binding protein MntB (mntB) of Listeria monocytogenes serovar 1/2a (strain ATCC BAA-679 / EGD-e).